The following is a 432-amino-acid chain: 23S rRNA (uracil(1939)-C(5))-methyltransferase RlmD (432 aa).

Positions 1-54 (MNPVVDILSLDHEGHGVARLDGKVTFVDGALAGERAEIAIFRKHAKYNSANAVA) constitute a TRAM domain. Positions 67, 73, 76, and 155 each coordinate [4Fe-4S] cluster. S-adenosyl-L-methionine-binding residues include glutamine 264, phenylalanine 293, asparagine 298, glutamate 314, asparagine 341, and aspartate 362. Cysteine 389 serves as the catalytic Nucleophile.

It belongs to the class I-like SAM-binding methyltransferase superfamily. RNA M5U methyltransferase family. RlmD subfamily.

The catalysed reaction is uridine(1939) in 23S rRNA + S-adenosyl-L-methionine = 5-methyluridine(1939) in 23S rRNA + S-adenosyl-L-homocysteine + H(+). Its function is as follows. Catalyzes the formation of 5-methyl-uridine at position 1939 (m5U1939) in 23S rRNA. The sequence is that of 23S rRNA (uracil(1939)-C(5))-methyltransferase RlmD from Thiobacillus denitrificans (strain ATCC 25259 / T1).